The sequence spans 93 residues: Aspartyl/glutamyl-tRNA(Asn/Gln) amidotransferase subunit C (93 aa).

This sequence belongs to the GatC family. In terms of assembly, heterotrimer of A, B and C subunits.

The catalysed reaction is L-glutamyl-tRNA(Gln) + L-glutamine + ATP + H2O = L-glutaminyl-tRNA(Gln) + L-glutamate + ADP + phosphate + H(+). The enzyme catalyses L-aspartyl-tRNA(Asn) + L-glutamine + ATP + H2O = L-asparaginyl-tRNA(Asn) + L-glutamate + ADP + phosphate + 2 H(+). In terms of biological role, allows the formation of correctly charged Asn-tRNA(Asn) or Gln-tRNA(Gln) through the transamidation of misacylated Asp-tRNA(Asn) or Glu-tRNA(Gln) in organisms which lack either or both of asparaginyl-tRNA or glutaminyl-tRNA synthetases. The reaction takes place in the presence of glutamine and ATP through an activated phospho-Asp-tRNA(Asn) or phospho-Glu-tRNA(Gln). In Methanocella arvoryzae (strain DSM 22066 / NBRC 105507 / MRE50), this protein is Aspartyl/glutamyl-tRNA(Asn/Gln) amidotransferase subunit C.